The primary structure comprises 159 residues: Abscisic acid and environmental stress-inducible protein (159 aa).

6 repeat units span residues 38–49 (GGGYNHGGGGYN), 50–61 (GGGYNHGGGGYN), 63–74 (GGGYNHGGGGYN), 77–88 (GGGYNHGGGGYN), 91–102 (GGGYNHGGGGYN), and 105–116 (GGGYNHGGGGYN). The 7 X 12 AA repeats of G-G-G-Y-N-H-G-G-G-Y-N stretch occupies residues 38–135 (GGGYNHGGGG…GYNHGGGGCQ (98 aa)). One copy of the 7; approximate repeat lies at 124-135 (GGGYNHGGGGCQ).

The protein belongs to the GRP family.

This is Abscisic acid and environmental stress-inducible protein from Medicago sativa subsp. falcata (Sickle medic).